A 314-amino-acid chain; its full sequence is MKYKTTSVSIIYINEDMINQRIDNFLQKKLKNVPRSMIYRIIRTGKIRINKKRIKPDYKLKIGDKLRIPPIKILCEKKSSLLTTEYKKNLLNNILYEDNYLLIINKPSGIAVHGGSGINLGVIEYFRKIRPLEKFLELVHRIDRDTSGVLMLAKKRRSLLSLHKQIREKKVQKKYIALVHGLWPLSLRKVSEPLLKTHLKNKQRKILINKEGKPAETYFKIKKQYLFTTLVSITPKTGRTHQIRVHTLHAGHPILFDKRYGKRDLDCNIKNKTKINRLLLHATSINFIHPETGKKMHIVAPLDVYFKNYLNTLI.

Residues 20–94 form the S4 RNA-binding domain; it reads QRIDNFLQKK…EYKKNLLNNI (75 aa). Residue Asp143 is part of the active site.

The protein belongs to the pseudouridine synthase RluA family.

It carries out the reaction uridine(955/2504/2580) in 23S rRNA = pseudouridine(955/2504/2580) in 23S rRNA. Its function is as follows. Responsible for synthesis of pseudouridine from uracil at positions 955, 2504 and 2580 in 23S ribosomal RNA. This chain is Ribosomal large subunit pseudouridine synthase C (rluC), found in Buchnera aphidicola subsp. Schizaphis graminum (strain Sg).